The chain runs to 143 residues: UPF0201 protein PAE1632 (143 aa).

It belongs to the UPF0201 family.

This is UPF0201 protein PAE1632 from Pyrobaculum aerophilum (strain ATCC 51768 / DSM 7523 / JCM 9630 / CIP 104966 / NBRC 100827 / IM2).